The primary structure comprises 172 residues: Type II secretion system protein H (172 aa).

A propeptide spans 1–6 (leader sequence); that stretch reads MRASRG. F7 carries the N-methylphenylalanine modification. The helical transmembrane segment at 7-27 threads the bilayer; it reads FTLIELMVVMVIISVLIGLAV.

It belongs to the GSP H family. As to quaternary structure, type II secretion is composed of four main components: the outer membrane complex, the inner membrane complex, the cytoplasmic secretion ATPase and the periplasm-spanning pseudopilus. Forms the tip of the type II pseudopilus by interacting with XcpV, XcpW and XcpX. Interacts with core component XcpT. In terms of processing, cleaved by prepilin peptidase. Methylated by prepilin peptidase at the amino group of the N-terminal phenylalanine once the leader sequence is cleaved by prepilin peptidase.

It localises to the cell inner membrane. Functionally, component of the type II secretion system required for the energy-dependent secretion of extracellular factors such as proteases and toxins from the periplasm. Part of the pseudopilus tip complex that is critical for the recognition and binding of secretion substrates. Type II pseudopilus confers increased bacterial adhesive capabilities. This is Type II secretion system protein H (xcpU) from Pseudomonas aeruginosa (strain ATCC 15692 / DSM 22644 / CIP 104116 / JCM 14847 / LMG 12228 / 1C / PRS 101 / PAO1).